A 304-amino-acid chain; its full sequence is Aspartate carbamoyltransferase catalytic subunit (304 aa).

Carbamoyl phosphate contacts are provided by Arg-56 and Thr-57. L-aspartate is bound at residue Lys-85. 3 residues coordinate carbamoyl phosphate: Arg-106, His-134, and Gln-137. Arg-167 and Arg-226 together coordinate L-aspartate. Leu-265 and Pro-266 together coordinate carbamoyl phosphate.

Belongs to the aspartate/ornithine carbamoyltransferase superfamily. ATCase family. Heterooligomer of catalytic and regulatory chains.

It carries out the reaction carbamoyl phosphate + L-aspartate = N-carbamoyl-L-aspartate + phosphate + H(+). Its pathway is pyrimidine metabolism; UMP biosynthesis via de novo pathway; (S)-dihydroorotate from bicarbonate: step 2/3. Its function is as follows. Catalyzes the condensation of carbamoyl phosphate and aspartate to form carbamoyl aspartate and inorganic phosphate, the committed step in the de novo pyrimidine nucleotide biosynthesis pathway. This chain is Aspartate carbamoyltransferase catalytic subunit, found in Picrophilus torridus (strain ATCC 700027 / DSM 9790 / JCM 10055 / NBRC 100828 / KAW 2/3).